Here is a 129-residue protein sequence, read N- to C-terminus: Large ribosomal subunit protein bL17 (129 aa).

The protein belongs to the bacterial ribosomal protein bL17 family. As to quaternary structure, part of the 50S ribosomal subunit. Contacts protein L32.

In Actinobacillus succinogenes (strain ATCC 55618 / DSM 22257 / CCUG 43843 / 130Z), this protein is Large ribosomal subunit protein bL17.